A 239-amino-acid chain; its full sequence is Ribose-5-phosphate isomerase A (239 aa).

Residues serine 39–threonine 42, aspartate 95–aspartate 98, and lysine 108–glycine 111 contribute to the substrate site. The active-site Proton acceptor is the glutamate 117. A substrate-binding site is contributed by lysine 135.

The protein belongs to the ribose 5-phosphate isomerase family. As to quaternary structure, homodimer.

The enzyme catalyses aldehydo-D-ribose 5-phosphate = D-ribulose 5-phosphate. The protein operates within carbohydrate degradation; pentose phosphate pathway; D-ribose 5-phosphate from D-ribulose 5-phosphate (non-oxidative stage): step 1/1. In terms of biological role, catalyzes the reversible conversion of ribose-5-phosphate to ribulose 5-phosphate. In Chlamydia muridarum (strain MoPn / Nigg), this protein is Ribose-5-phosphate isomerase A.